Consider the following 279-residue polypeptide: Thioredoxin domain-containing protein plp1 (279 aa).

A compositionally biased stretch (basic and acidic residues) spans 56 to 70 (RKEDTQDYNEPELHN). Residues 56 to 75 (RKEDTQDYNEPELHNSNDPT) form a disordered region. The Thioredoxin domain maps to 137 to 248 (FLTVENEREV…LEFRLLKSSA (112 aa)). Residues 254-267 (EESSSNKSIYHDEL) show a composition bias toward basic and acidic residues. The segment at 254–279 (EESSSNKSIYHDELQNNQSDDSDFFE) is disordered. A phosphoserine mark is found at S272 and S275.

The protein belongs to the phosducin family.

The protein resides in the cytoplasm. Its subcellular location is the nucleus. Functionally, inhibits early G-protein signaling events following pheromone stimulation. May help create heterodimerizable beta-tubulin by facilitating the efficient transfer of nascent beta-tubulin polypeptides to the folding apparatus. The protein is Thioredoxin domain-containing protein plp1 (plp1) of Schizosaccharomyces pombe (strain 972 / ATCC 24843) (Fission yeast).